The following is a 334-amino-acid chain: Fructose-1,6-bisphosphatase class 1 (334 aa).

Residues Glu91, Asp113, Leu115, and Asp116 each coordinate Mg(2+). Residues 116-119 (DGSS), Asn208, and Lys274 each bind substrate. Glu280 is a binding site for Mg(2+).

It belongs to the FBPase class 1 family. Homotetramer. The cofactor is Mg(2+).

It localises to the cytoplasm. It carries out the reaction beta-D-fructose 1,6-bisphosphate + H2O = beta-D-fructose 6-phosphate + phosphate. Its pathway is carbohydrate biosynthesis; gluconeogenesis. The polypeptide is Fructose-1,6-bisphosphatase class 1 (Janthinobacterium sp. (strain Marseille) (Minibacterium massiliensis)).